The sequence spans 293 residues: Bifunctional protein FolD (293 aa).

Residues 164–166 (GRS), S193, and T234 each bind NADP(+).

It belongs to the tetrahydrofolate dehydrogenase/cyclohydrolase family. Homodimer.

It catalyses the reaction (6R)-5,10-methylene-5,6,7,8-tetrahydrofolate + NADP(+) = (6R)-5,10-methenyltetrahydrofolate + NADPH. It carries out the reaction (6R)-5,10-methenyltetrahydrofolate + H2O = (6R)-10-formyltetrahydrofolate + H(+). The protein operates within one-carbon metabolism; tetrahydrofolate interconversion. In terms of biological role, catalyzes the oxidation of 5,10-methylenetetrahydrofolate to 5,10-methenyltetrahydrofolate and then the hydrolysis of 5,10-methenyltetrahydrofolate to 10-formyltetrahydrofolate. This is Bifunctional protein FolD from Phocaeicola vulgatus (strain ATCC 8482 / DSM 1447 / JCM 5826 / CCUG 4940 / NBRC 14291 / NCTC 11154) (Bacteroides vulgatus).